The following is a 103-amino-acid chain: Large ribosomal subunit protein bL21 (103 aa).

The protein belongs to the bacterial ribosomal protein bL21 family. Part of the 50S ribosomal subunit. Contacts protein L20.

Its function is as follows. This protein binds to 23S rRNA in the presence of protein L20. The protein is Large ribosomal subunit protein bL21 of Thioalkalivibrio sulfidiphilus (strain HL-EbGR7).